The primary structure comprises 1289 residues: Ethylene-insensitive protein 2.1 (1289 aa).

5 helical membrane-spanning segments follow: residues 18–38 (LLPA…PGKW), 48–68 (FGFD…LCQY), 96–116 (FLGV…ILGI), 128–148 (LSTC…FATL), and 155–175 (SFLC…GVLI). A glycan (N-linked (GlcNAc...) asparagine) is linked at asparagine 185. Residues 199–219 (LMSLLGASIMPHNFFLHSAIV) form a helical membrane-spanning segment. A glycan (N-linked (GlcNAc...) asparagine) is linked at asparagine 227. 7 helical membrane passes run 235–255 (LNHF…NFVL), 260–280 (ANVF…MSLM), 288–308 (VAPF…AFSW), 335–355 (IIAV…GIYQ), 356–376 (LLIL…IPLF), 393–413 (FLEF…IIFV), and 439–459 (YIVL…LAAT). N-linked (GlcNAc...) asparagine glycosylation is present at asparagine 521. Residues 611–659 (LHTEKEDDEGDNWEPEDSSKGVPGSTLSLTSDGPGSFRSLSGKSDAGGN) are disordered. The segment covering 616–626 (EDDEGDNWEPE) has biased composition (acidic residues). Residues 635-652 (STLSLTSDGPGSFRSLSG) are compositionally biased toward polar residues. A phosphoserine mark is found at serine 646 and serine 663. The N-linked (GlcNAc...) asparagine glycan is linked to asparagine 745. The segment at 792 to 816 (SIADSSERRYSGVRTPPSSDGWDNQ) is disordered. The span at 807–816 (PPSSDGWDNQ) shows a compositional bias: polar residues. At threonine 819 the chain carries Phosphothreonine. Serine 923 bears the Phosphoserine mark. Asparagine 1025 carries N-linked (GlcNAc...) asparagine glycosylation. A disordered region spans residues 1208-1227 (HRSSPPASNGMLPPASKPGR). The short motif at 1274-1281 (LKRYKRRL) is the Nuclear localization signal element.

Belongs to the NRAMP (TC 2.A.55) family.

The protein localises to the endoplasmic reticulum membrane. It is found in the nucleus. It localises to the cytoplasm. In terms of biological role, central factor in signaling pathways regulated by ethylene (ET) and involved in various processes including development, plant defense, senescence, nucleotide sugar flux, and tropisms. Its function is as follows. Trafficking signal inducing ethylene response. The nuclear localization is both necessary and sufficient to activate EIN3-mediated transcription and ethylene responses. The polypeptide is Ethylene-insensitive protein 2.1 (Populus trichocarpa (Western balsam poplar)).